The sequence spans 101 residues: Chaperone modulatory protein CbpM (101 aa).

The protein belongs to the CbpM family.

Interacts with CbpA and inhibits both the DnaJ-like co-chaperone activity and the DNA binding activity of CbpA. Together with CbpA, modulates the activity of the DnaK chaperone system. Does not inhibit the co-chaperone activity of DnaJ. The chain is Chaperone modulatory protein CbpM from Pseudomonas putida (strain ATCC 47054 / DSM 6125 / CFBP 8728 / NCIMB 11950 / KT2440).